A 1116-amino-acid polypeptide reads, in one-letter code: Rho GTPase-activating protein 45 (1116 aa).

Residues 1-72 form a disordered region; sequence MFSRKKRELM…RPTSLSRHAS (72 aa). Positions 22-31 are enriched in polar residues; the sequence is GSPNPQSSSG. 4 positions are modified to phosphoserine: serine 23, serine 72, serine 92, and serine 98. The 271-residue stretch at 268–538 folds into the F-BAR domain; it reads EEVDMLLQRC…SSKLYDPGQQ (271 aa). The stretch at 375–498 forms a coiled coil; sequence EHERRRKEIK…QIQEVIRQSD (124 aa). The segment at 422-457 is disordered; the sequence is VAKAEEEQQGTGPGAGTAASKALDKRRRLEEEAKNK. Residues 448-457 are compositionally biased toward basic and acidic residues; that stretch reads RRLEEEAKNK. Phosphoserine occurs at positions 568, 577, 591, and 618. Positions 569–658 are disordered; it reads PIMRTRKGSF…MSSSEELGDQ (90 aa). Polar residues predominate over residues 621–635; sequence ISISDTEVGLDTSSG. Residues 643–652 are compositionally biased toward low complexity; that stretch reads TSSSGTMSSS. The Phorbol-ester/DAG-type zinc finger occupies 699–744; sequence THRLRKLRTPAKCRECNSYVYFQGAECEECCLACHKKCLETLAIQC. The 214-residue stretch at 758-971 folds into the Rho-GAP domain; sequence QDFSQAALST…TLIVHYGLVF (214 aa). 4 positions are modified to phosphoserine: serine 946, serine 1017, serine 1020, and serine 1022. 2 disordered regions span residues 1004–1035 and 1050–1116; these read EEAE…SSSD and AGLE…PQFV. 2 stretches are compositionally biased toward polar residues: residues 1080 to 1090 and 1105 to 1116; these read FNTNQSNNTSR and GGTSQERQPQFV.

Its subcellular location is the cytoplasm. It localises to the cell projection. The protein resides in the ruffle membrane. Contains a GTPase activator for the Rho-type GTPases (RhoGAP) domain that would be able to negatively regulate the actin cytoskeleton as well as cell spreading. However, also contains N-terminally a BAR-domin which is able to play an autoinhibitory effect on this RhoGAP activity. This is Rho GTPase-activating protein 45 from Mus musculus (Mouse).